A 95-amino-acid chain; its full sequence is Small ribosomal subunit protein uS19 (95 aa).

It belongs to the universal ribosomal protein uS19 family.

In terms of biological role, protein S19 forms a complex with S13 that binds strongly to the 16S ribosomal RNA. This chain is Small ribosomal subunit protein uS19, found in Bdellovibrio bacteriovorus (strain ATCC 15356 / DSM 50701 / NCIMB 9529 / HD100).